The primary structure comprises 287 residues: Beta-lactamase GES-1 (287 aa).

The N-terminal stretch at 1-18 is a signal peptide; it reads MRFIHALLLAGIAHSAYA. A disulfide bond links C63 and C233. S64 functions as the Nucleophile; acyl-ester intermediate in the catalytic mechanism. 4 residues coordinate a beta-lactam: K67, S125, E161, and T232.

This sequence belongs to the class-A beta-lactamase family. In terms of assembly, monomer. May form dimers.

It carries out the reaction a beta-lactam + H2O = a substituted beta-amino acid. Inhibited by the beta-lactamase-blocking agents clavulanic acid, tazobactam, sulbactam and tazobactam and the carbapenem, imipenem. Inhibition by imipenem may involve Gly-165. In terms of biological role, extended-spectrum beta-lactamase (ESBL) which confers resistance to penicillins, as well as first, second, third and fourth-generation cephalosporins. Has ceftazidime-hydrolyzing activity. Inactive against the carbapenems, imipenem, meropenem, ertapenem and doripenem. However, weak hydrolytic activity with respect to imipenem has also been reported. The polypeptide is Beta-lactamase GES-1 (Klebsiella pneumoniae).